The chain runs to 205 residues: Lymphotoxin-alpha (205 aa).

Positions 1–34 (MTPPERLFLPRVCGTTLHLLLLGLLLVLLPGAQG) are cleaved as a signal peptide. T41 carries O-linked (GalNAc...) threonine; partial glycosylation. The 143-residue stretch at 63–205 (PAAHLIGDPS…STVFFGAFAL (143 aa)) folds into the THD domain. N-linked (GlcNAc...) asparagine glycosylation is present at N96.

It belongs to the tumor necrosis factor family. As to quaternary structure, homotrimer, and heterotrimer of either two LTB and one LTA subunits or (less prevalent) two LTA and one LTB subunits. Interacts with TNFRSF14.

The protein resides in the secreted. The protein localises to the membrane. Functionally, cytokine that in its homotrimeric form binds to TNFRSF1A/TNFR1, TNFRSF1B/TNFBR and TNFRSF14/HVEM. In its heterotrimeric form with LTB binds to TNFRSF3/LTBR. Lymphotoxin is produced by lymphocytes and is cytotoxic for a wide range of tumor cells in vitro and in vivo. The chain is Lymphotoxin-alpha (LTA) from Homo sapiens (Human).